Reading from the N-terminus, the 917-residue chain is Hexokinase-2 (917 aa).

An N-acetylmethionine modification is found at Met1. Residues 1-16 (MIASHLLAYFFTELNH) form a mitochondrial-binding peptide (MBP) region. 2 consecutive Hexokinase domains span residues 16-458 (HDQV…MVTA) and 464-906 (AYQH…LITA). ATP-binding positions include Arg30 and 84–89 (DLGGTN). Residues 73–207 (DGTEHGEFLA…DFDIDIVAMV (135 aa)) form a hexokinase small subdomain 1 region. A D-glucose 6-phosphate-binding site is contributed by 84–88 (DLGGT). Residues 155 to 156 (SF), 172 to 173 (TK), 208 to 209 (ND), Asn235, Glu260, and 291 to 294 (QLFE) contribute to the D-glucose site. The segment at 208–447 (NDTVATMMTC…CDIRFLCSED (240 aa)) is hexokinase large subdomain 1. Asp209 serves as a coordination point for D-glucose 6-phosphate. 413-415 (DGS) contacts D-glucose 6-phosphate. An ATP-binding site is contributed by 425-426 (KR). D-glucose 6-phosphate contacts are provided by residues Ser449 and 532 to 536 (DLGGT). A hexokinase small subdomain 2 region spans residues 521-655 (DGTEKGDFLA…EFDLDVVAVV (135 aa)). 532–537 (DLGGTN) provides a ligand contact to ATP. Residues 603–604 (SF), 620–621 (TK), and 656–657 (ND) each bind D-glucose. Residues 656-895 (NDTVGTMMTC…CDVSFLESED (240 aa)) are hexokinase large subdomain 2. Asp657 and Thr680 together coordinate D-glucose 6-phosphate. Thr680 serves as a coordination point for ATP. D-glucose is bound by residues 682 to 683 (SN), Glu708, and 739 to 742 (QRFE). ATP is bound by residues 747-748 (GM), 784-788 (TKFLS), and 863-867 (TLYKL). Residues 861-863 (DGT) and Ser897 contribute to the D-glucose 6-phosphate site.

The protein belongs to the hexokinase family. In terms of assembly, monomer. Interacts with TIGAR; the interaction increases hexokinase activity in a hypoxia- and HIF1A-dependent manner.

The protein resides in the mitochondrion outer membrane. The protein localises to the cytoplasm. It localises to the cytosol. It carries out the reaction a D-hexose + ATP = a D-hexose 6-phosphate + ADP + H(+). The catalysed reaction is D-fructose + ATP = D-fructose 6-phosphate + ADP + H(+). The enzyme catalyses D-glucose + ATP = D-glucose 6-phosphate + ADP + H(+). It participates in carbohydrate metabolism; hexose metabolism. The protein operates within carbohydrate degradation; glycolysis; D-glyceraldehyde 3-phosphate and glycerone phosphate from D-glucose: step 1/4. Its activity is regulated as follows. Hexokinase activity is specifically inhibited by 2,6-disubstituted glucosamines. Its function is as follows. Catalyzes the phosphorylation of hexose, such as D-glucose and D-fructose, to hexose 6-phosphate (D-glucose 6-phosphate and D-fructose 6-phosphate, respectively). Mediates the initial step of glycolysis by catalyzing phosphorylation of D-glucose to D-glucose 6-phosphate. Plays a key role in maintaining the integrity of the outer mitochondrial membrane by preventing the release of apoptogenic molecules from the intermembrane space and subsequent apoptosis. The chain is Hexokinase-2 from Equus zebra (Mountain zebra).